Consider the following 157-residue polypeptide: Endoribonuclease YbeY (157 aa).

Histidine 123, histidine 127, and histidine 133 together coordinate Zn(2+).

The protein belongs to the endoribonuclease YbeY family. Requires Zn(2+) as cofactor.

It localises to the cytoplasm. In terms of biological role, single strand-specific metallo-endoribonuclease involved in late-stage 70S ribosome quality control and in maturation of the 3' terminus of the 16S rRNA. The sequence is that of Endoribonuclease YbeY from Desulfitobacterium hafniense (strain Y51).